The primary structure comprises 148 residues: SsrA-binding protein (148 aa).

Positions 123-148 are disordered; it reads KLHDKRETEKKRDWEREKARIMRSAT. Basic and acidic residues predominate over residues 126–142; the sequence is DKRETEKKRDWEREKAR.

It belongs to the SmpB family.

It is found in the cytoplasm. Its function is as follows. Required for rescue of stalled ribosomes mediated by trans-translation. Binds to transfer-messenger RNA (tmRNA), required for stable association of tmRNA with ribosomes. tmRNA and SmpB together mimic tRNA shape, replacing the anticodon stem-loop with SmpB. tmRNA is encoded by the ssrA gene; the 2 termini fold to resemble tRNA(Ala) and it encodes a 'tag peptide', a short internal open reading frame. During trans-translation Ala-aminoacylated tmRNA acts like a tRNA, entering the A-site of stalled ribosomes, displacing the stalled mRNA. The ribosome then switches to translate the ORF on the tmRNA; the nascent peptide is terminated with the 'tag peptide' encoded by the tmRNA and targeted for degradation. The ribosome is freed to recommence translation, which seems to be the essential function of trans-translation. The chain is SsrA-binding protein from Burkholderia thailandensis (strain ATCC 700388 / DSM 13276 / CCUG 48851 / CIP 106301 / E264).